The following is a 424-amino-acid chain: Serine--tRNA ligase (424 aa).

231-233 (TAE) is a binding site for L-serine. 262–264 (RAE) contributes to the ATP binding site. Glu285 serves as a coordination point for L-serine. 349-352 (EISS) contributes to the ATP binding site. Ser385 is a binding site for L-serine.

Belongs to the class-II aminoacyl-tRNA synthetase family. Type-1 seryl-tRNA synthetase subfamily. As to quaternary structure, homodimer. The tRNA molecule binds across the dimer.

It is found in the cytoplasm. It carries out the reaction tRNA(Ser) + L-serine + ATP = L-seryl-tRNA(Ser) + AMP + diphosphate + H(+). The catalysed reaction is tRNA(Sec) + L-serine + ATP = L-seryl-tRNA(Sec) + AMP + diphosphate + H(+). It functions in the pathway aminoacyl-tRNA biosynthesis; selenocysteinyl-tRNA(Sec) biosynthesis; L-seryl-tRNA(Sec) from L-serine and tRNA(Sec): step 1/1. Its function is as follows. Catalyzes the attachment of serine to tRNA(Ser). Is also able to aminoacylate tRNA(Sec) with serine, to form the misacylated tRNA L-seryl-tRNA(Sec), which will be further converted into selenocysteinyl-tRNA(Sec). The polypeptide is Serine--tRNA ligase (Geobacillus kaustophilus (strain HTA426)).